Here is a 1055-residue protein sequence, read N- to C-terminus: MAPAATAAASSGKGSFDLATLFVADKAARDEAGLALADAVKKSGVEFFTQIGFNDAIVKALNDKKSQSAREGACEVISTLCENGAAQLLEPHVISSAENTPFPALLEAFADKVAAVKTAAIAAVKAIVQSMNPWASFVLLPALLNLIRTSGKWQIKAGSLEILQQLITSAPFQMGEAMPDLVPVLAEAVWDTKSDVKKAAKATLEKAVSLVENKDIEKFVPALVKSLLNPIEEVPKTISLLSATTFVSEVTAPTISLIAPLLIRGLDERPTATKRKVCVIADNMSKLVDSEYTVRPFLPQLLPRLIKTSETIADPEARSVANRAIVTLRRIGKVPAESDGSDLPPLPVAEGPHLATNFVALVKKHGGVSVEQTNPGLAYAGVLAASLVNHHNFDQKTWESTLPPYLKLALPSYDSLPAVRELLQKKADEAETDDAKFPDEEEGEDLCNIEQFNLAYGAKILLHHANMRLKRGHRYGLCGRNGSGKSTLMNAIINNQVEGFPPPTEVRTFYVQHDIDGSEAEISILDWVLGDKRLLATPDEIKSTLESVGFDEVKQKNSIGSLSGGWKMKLALARAILFKADILLLDEPTNHLDVLNVDWLINYLTSLTRCTSIIVSHDSDFLNRTVTDVLHLNNFKLKRYPGNLEDFVQHVPEAKSYYQLDVAEDYQFKLPNPPLLDGVKTKEKSLLKMRNVSFQYPGSSIQQLYDISLQVSLSSRVAILGPNGSGKSTLVKLLTGETEPNLGGQVWKHPNLVIGYVAQHAFHHIDNHLDSTPLEYMLWRYQTGEDLEEMHKANRVMTEAEIAKMKEGATVIKDGVKRIIDELVARKKLKQSYEYEVSFKGMSSAENIWISRDELVARGFEKKVMELDTREAQRLGLMRPLVRREIEKHFEDFGLDAEFVSHNSMRGLSGGQKVKVVLGAATWRRPHIICLDEPTNYLDRESLAALIAALKNFEGGVLIITHNREFSESICTEVWAMREGYLEASGHNWVEGQGSGERIDKKAADDDEVEYDALGNPIVKAKKEKKLSAADKRKAKKDRMARRKRGEEVFSDEEL.

ADP is bound at residue Val-45. 7 HEAT repeats span residues 48 to 86, 96 to 133, 134 to 172, 176 to 213, 218 to 255, 257 to 290, and 296 to 337; these read FTQIGFNDAIVKALNDKKSQSAREGACEVISTLCENGAA, SAENTPFPALLEAFADKVAAVKTAAIAAVKAIVQSMNP, WASFVLLPALLNLIRTSGKWQIKAGSLEILQQLITSAPF, EAMPDLVPVLAEAVWDTKSDVKKAAKATLEKAVSLVEN, KFVPALVKSLLNPIEEVPKTISLLSATTFVSEVTAPTI, LIAPLLIRGLDERPTATKRKVCVIADNMSKLVDS, and PFLP…VPAE. ABC transporter domains follow at residues 447–659 and 687–1004; these read CNIE…SYYQ and LKMR…KKAA. ADP contacts are provided by Asn-723, Glu-933, Asn-936, and His-962. Residues 1024 to 1055 form a disordered region; that stretch reads EKKLSAADKRKAKKDRMARRKRGEEVFSDEEL. Residues 1033 to 1044 show a composition bias toward basic residues; that stretch reads RKAKKDRMARRK.

The protein belongs to the ABC transporter superfamily. ABCF family. EF3 subfamily. Interacts with CCH1; the interaction is direct and required for the localization of CCH1 to the cell membrane.

It is found in the cytoplasm. The protein resides in the cytosol. The catalysed reaction is ATP + H2O = ADP + phosphate + H(+). The protein operates within protein biosynthesis; polypeptide chain elongation. Its function is as follows. Ribosome-dependent ATPase that functions in cytoplasmic translation elongation. Required for the ATP-dependent release of deacylated tRNA from the ribosomal E-site during protein biosynthesis. Stimulates the eEF1A-dependent binding of aminoacyl-tRNA to the ribosomal A-site, which has reduced affinity for tRNA as long as the E-site is occupied. Assists translation termination by stimulating the release of nascent protein from the ribosome by release factors. Appears to localize calcium-channel protein CCH1 to the plasma membrane. The polypeptide is Elongation factor 3 (Cryptococcus neoformans var. grubii serotype A (strain H99 / ATCC 208821 / CBS 10515 / FGSC 9487) (Filobasidiella neoformans var. grubii)).